The primary structure comprises 489 residues: GTPase Der (489 aa).

EngA-type G domains are found at residues 3-166 (PVVA…FDDV) and 201-374 (IKLA…DSST). Residues 9–16 (GRPNVGKS), 56–60 (DTGGI), 118–121 (NKTD), 207–214 (GRPNVGKS), 254–258 (DTAGV), and 319–322 (NKWD) each bind GTP. A KH-like domain is found at 375–459 (KRISTSILTR…PIRIEFREGT (85 aa)).

The protein belongs to the TRAFAC class TrmE-Era-EngA-EngB-Septin-like GTPase superfamily. EngA (Der) GTPase family. Associates with the 50S ribosomal subunit.

In terms of biological role, GTPase that plays an essential role in the late steps of ribosome biogenesis. This Psychromonas ingrahamii (strain DSM 17664 / CCUG 51855 / 37) protein is GTPase Der.